The primary structure comprises 218 residues: Peptide methionine sulfoxide reductase MsrA (218 aa).

Residues 1–28 (MSFLDSYRKKTQMPSTDEALPGRAQPIP) form a disordered region. The active site involves Cys-57.

The protein belongs to the MsrA Met sulfoxide reductase family.

It carries out the reaction L-methionyl-[protein] + [thioredoxin]-disulfide + H2O = L-methionyl-(S)-S-oxide-[protein] + [thioredoxin]-dithiol. It catalyses the reaction [thioredoxin]-disulfide + L-methionine + H2O = L-methionine (S)-S-oxide + [thioredoxin]-dithiol. Its function is as follows. Has an important function as a repair enzyme for proteins that have been inactivated by oxidation. Catalyzes the reversible oxidation-reduction of methionine sulfoxide in proteins to methionine. This chain is Peptide methionine sulfoxide reductase MsrA, found in Brucella anthropi (strain ATCC 49188 / DSM 6882 / CCUG 24695 / JCM 21032 / LMG 3331 / NBRC 15819 / NCTC 12168 / Alc 37) (Ochrobactrum anthropi).